The sequence spans 297 residues: Protease HtpX homolog (297 aa).

2 helical membrane-spanning segments follow: residues 14–34 and 39–59; these read VILLFAFFVLLVVIGAAAGYL and YQLGAAFALIIGAIYAFSMIF. A Zn(2+)-binding site is contributed by H143. E144 is a catalytic residue. H147 contributes to the Zn(2+) binding site. Helical transmembrane passes span 158 to 178 and 193 to 213; these read IAVALASAVTLISSIGGRMMW and GFGAIMLIFSILSLILAPLAA. Zn(2+) is bound at residue E225.

This sequence belongs to the peptidase M48B family. Zn(2+) serves as cofactor.

The protein resides in the cell membrane. This Streptococcus equi subsp. equi (strain 4047) protein is Protease HtpX homolog.